The sequence spans 377 residues: Phosphoserine aminotransferase (377 aa).

R43 lines the L-glutamate pocket. The pyridoxal 5'-phosphate site is built by W105, T164, D189, and Q212. N6-(pyridoxal phosphate)lysine is present on K213. 254 to 255 contacts pyridoxal 5'-phosphate; it reads NT.

This sequence belongs to the class-V pyridoxal-phosphate-dependent aminotransferase family. SerC subfamily. As to quaternary structure, homodimer. Pyridoxal 5'-phosphate serves as cofactor.

It localises to the cytoplasm. It catalyses the reaction O-phospho-L-serine + 2-oxoglutarate = 3-phosphooxypyruvate + L-glutamate. The catalysed reaction is 4-(phosphooxy)-L-threonine + 2-oxoglutarate = (R)-3-hydroxy-2-oxo-4-phosphooxybutanoate + L-glutamate. Its pathway is amino-acid biosynthesis; L-serine biosynthesis; L-serine from 3-phospho-D-glycerate: step 2/3. It functions in the pathway cofactor biosynthesis; pyridoxine 5'-phosphate biosynthesis; pyridoxine 5'-phosphate from D-erythrose 4-phosphate: step 3/5. Catalyzes the reversible conversion of 3-phosphohydroxypyruvate to phosphoserine and of 3-hydroxy-2-oxo-4-phosphonooxybutanoate to phosphohydroxythreonine. In Bordetella bronchiseptica (strain ATCC BAA-588 / NCTC 13252 / RB50) (Alcaligenes bronchisepticus), this protein is Phosphoserine aminotransferase.